A 181-amino-acid polypeptide reads, in one-letter code: Protein FAM237A (181 aa).

Positions 1-33 (MADPGNRGGIHRPLSFTCSLLIVGMCCVSPFFC) are cleaved as a signal peptide. Leu-113 is modified (leucine amide). Residues 114-181 (GRRQLVGEEE…GKVNLEIKRK (68 aa)) constitute a propeptide, removed in the mature form.

Post-translationally, the active form requires C-terminal amidation and disulfide bond formation. Expressed in the pituitary, testis, and heart and at lower levels in the brain.

Its subcellular location is the secreted. Functionally, may be capable of activating GPR83 via the GNAQ signaling pathway. This is Protein FAM237A from Homo sapiens (Human).